Here is a 2533-residue protein sequence, read N- to C-terminus: Highly reducing polyketide synthase azaB (2533 aa).

Residues 7 to 433 (TAPMAIIGMA…GSNAHAILES (427 aa)) form the Ketosynthase family 3 (KS3) domain. Residues Cys180, His315, and His355 each act as for beta-ketoacyl synthase activity in the active site. The tract at residues 554-821 (WVFTGQGAQW…VEFESSFRHM (268 aa)) is malonyl-CoA:ACP transacylase (MAT) domain. Residues 946–1081 (SDLVGYSQPS…GRISVITTSD (136 aa)) are N-terminal hotdog fold. Residues 946–1254 (SDLVGYSQPS…CQSLGRALDR (309 aa)) form the PKS/mFAS DH domain. Residues 947-1251 (DLVGYSQPSI…GLTCQSLGRA (305 aa)) are dehydratase (DH) domain. Catalysis depends on His978, which acts as the Proton acceptor; for dehydratase activity. The interval 1097–1254 (YNRRIDPRYM…CQSLGRALDR (158 aa)) is C-terminal hotdog fold. Residue Asp1163 is the Proton donor; for dehydratase activity of the active site. The segment at 1419–1554 (TRQVSELVRL…GGKLILMETT (136 aa)) is methyltransferase (CMet) domain. The enoyl reductase (ER) domain stretch occupies residues 1839–2155 (GLIDTLVFHD…TGQHMGKIII (317 aa)). A ketoreductase (KR) domain region spans residues 2178–2349 (ASYVIVGGLG…AVSLDLGIVR (172 aa)). Residues 2455 to 2532 (DAAALICQEL…DLSLRVATKR (78 aa)) enclose the Carrier domain. The residue at position 2492 (Ser2492) is an O-(pantetheine 4'-phosphoryl)serine.

Its pathway is secondary metabolite biosynthesis. Its function is as follows. Highly reducing polyketide synthase; part of the gene cluster that mediates the biosynthesis of azaphilones, a class of fungal metabolites characterized by a highly oxygenated pyrano-quinone bicyclic core and exhibiting a broad range of bioactivities. In the first step, the non-reducing polyketide synthase azaA forms the hexaketide precursor from successive condensations of five malonyl-CoA units, presumably with a simple acetyl-CoA starter unit. The reactive polyketide chain then undergoes a PT-mediated C2-C7 cyclization to afford the aromatic ring and is eventually released as an aldehyde through the R-domain. The putative ketoreductase azaE is proposed to catalyze the reduction of the terminal ketone resulting in the early culture product FK17-P2a. The monooxygenase azaH was demonstrated to be the only enzyme required to convert FK17-P2a to azanigerone E. AzaH first hydroxylates the benzaldehyde intermediate FK17-P2a at C4, which triggers the formation of the pyran-ring to afford azanigerone E. In parallel, the 2,4-dimethylhexanoyl chain is synthesized by the HR-PKS azaB and is proposed to be transferred to the C4-hydroxyl of azanigerone E by the acyltransferase azaD directly from the ACP domain of azaB. Alternatively, the 2,4-dimethyl-hexanoyl chain may be offloaded from the HR-PKS as a carboxylic acid and converted to an acyl-CoA by azaF. The resulting acyl-CoA molecule could then be taken up as a substrate by AzaD to form azanigerone B. To yield the carboxylic acid substituent in azanigerone A, the hydroxypropyl side chain of azanigerone B would need to undergo a C-C oxidative cleavage catalyzed by cytochrome P450 AzaI. AzaI is proposed to act on a vicinal diol that leads to a C-C bond scission either through an alkoxyradical intermediate or a peroxy complex. In the biosynthesis of azanigerone A, azanigerone B first undergoes hydroxylation at C10, possibly catalyzed by one of the two FAD-dependent monooxygenases encoded in the cluster, azaG or azaL, resulting in the vicinal diol azanigerone C. Oxidative cleavage of azanigerone C by azaI would yield the corresponding aldehyde derivative of azanigerone A. Finally, the dehydrogenase azaJ is proposed to convert the aldehyde functional group into the carboxylic acid, completing the conversion from azanigerone B to azanigerone A. Alternatively, the oxidation of aldehyde to carboxylic acid may be catalyzed by the same P450 enzyme azaI via consecutive oxidation or by endogenous alcohol dehydrogenase. In Aspergillus niger (strain ATCC 1015 / CBS 113.46 / FGSC A1144 / LSHB Ac4 / NCTC 3858a / NRRL 328 / USDA 3528.7), this protein is Highly reducing polyketide synthase azaB.